The following is a 436-amino-acid chain: Peptidase B (436 aa).

The Mn(2+) site is built by Lys201 and Asp206. Lys213 is a catalytic residue. Mn(2+) is bound by residues Asp224, Asp283, and Glu285. The active site involves Arg287.

Belongs to the peptidase M17 family. As to quaternary structure, homohexamer. The cofactor is Mn(2+).

It is found in the cytoplasm. The catalysed reaction is Release of an N-terminal amino acid, Xaa, from a peptide or arylamide. Xaa is preferably Glu or Asp but may be other amino acids, including Leu, Met, His, Cys and Gln.. Functionally, probably plays an important role in intracellular peptide degradation. This Pectobacterium atrosepticum (strain SCRI 1043 / ATCC BAA-672) (Erwinia carotovora subsp. atroseptica) protein is Peptidase B.